Reading from the N-terminus, the 485-residue chain is Glycogen synthase (485 aa).

Lys15 is an ADP-alpha-D-glucose binding site.

The protein belongs to the glycosyltransferase 1 family. Bacterial/plant glycogen synthase subfamily.

It catalyses the reaction [(1-&gt;4)-alpha-D-glucosyl](n) + ADP-alpha-D-glucose = [(1-&gt;4)-alpha-D-glucosyl](n+1) + ADP + H(+). It participates in glycan biosynthesis; glycogen biosynthesis. Synthesizes alpha-1,4-glucan chains using ADP-glucose. In Geobacillus thermodenitrificans (strain NG80-2), this protein is Glycogen synthase.